A 382-amino-acid chain; its full sequence is Homoserine O-succinyltransferase (382 aa).

Residues 51–359 enclose the AB hydrolase-1 domain; it reads NAILVCHALS…EATQGHDAFL (309 aa). The active-site Nucleophile is Ser157. Position 227 (Arg227) interacts with substrate. Active-site residues include Asp322 and His355. Position 356 (Asp356) interacts with substrate.

Belongs to the AB hydrolase superfamily. MetX family. In terms of assembly, homodimer.

It is found in the cytoplasm. It catalyses the reaction L-homoserine + succinyl-CoA = O-succinyl-L-homoserine + CoA. It participates in amino-acid biosynthesis; L-methionine biosynthesis via de novo pathway; O-succinyl-L-homoserine from L-homoserine: step 1/1. Functionally, transfers a succinyl group from succinyl-CoA to L-homoserine, forming succinyl-L-homoserine. In Halorhodospira halophila (strain DSM 244 / SL1) (Ectothiorhodospira halophila (strain DSM 244 / SL1)), this protein is Homoserine O-succinyltransferase.